The sequence spans 204 residues: Putative AgrB-like protein (204 aa).

5 helical membrane-spanning segments follow: residues 51-73, 87-107, 111-131, 151-168, and 173-190; these read VYGIALVTGLLLQTVTVHLSYLW, LNCTLISLTMFVLAPFIFQNI, NWIVLGTFAFILLNMFLFAPA, AMIGTLILTGIALLIPFA, and LIMVGSLFQVISINPLTY.

Belongs to the AgrB family.

Its subcellular location is the cell membrane. Its function is as follows. May be involved in the proteolytic processing of a quorum sensing system signal molecule precursor. In Listeria innocua serovar 6a (strain ATCC BAA-680 / CLIP 11262), this protein is Putative AgrB-like protein.